A 61-amino-acid polypeptide reads, in one-letter code: MDPNCSCSTGGSCSCATSCTCKACRCTSCKKSCCSCCPAGCAKCAQGCICKGASDKCSCCA.

The beta stretch occupies residues 1-29 (MDPNCSCSTGGSCSCATSCTCKACRCTSC). Cys-5, Cys-7, Cys-13, Cys-15, Cys-19, Cys-21, Cys-24, Cys-26, Cys-29, Cys-33, Cys-34, Cys-36, Cys-37, Cys-41, Cys-44, Cys-48, Cys-50, Cys-57, Cys-59, and Cys-60 together coordinate a divalent metal cation. The interval 30-61 (KKSCCSCCPAGCAKCAQGCICKGASDKCSCCA) is alpha.

The protein belongs to the metallothionein superfamily. Type 1 family. As to quaternary structure, monomer.

Functionally, metallothioneins have a high content of cysteine residues that bind various heavy metals; these proteins are transcriptionally regulated by both heavy metals and glucocorticoids. The chain is Metallothionein-1D (MT1D) from Sus scrofa (Pig).